A 138-amino-acid polypeptide reads, in one-letter code: Small ribosomal subunit protein uS11c (138 aa).

Residues 1 to 23 form a disordered region; sequence MAKPILRIGSRKNTRSGSRKNVR. The segment covering 9–23 has biased composition (basic residues); the sequence is GSRKNTRSGSRKNVR.

The protein belongs to the universal ribosomal protein uS11 family. Part of the 30S ribosomal subunit.

It is found in the plastid. The protein localises to the chloroplast. The chain is Small ribosomal subunit protein uS11c from Barbarea verna (Land cress).